The following is a 650-amino-acid chain: GATA zinc finger domain-containing protein 11 (650 aa).

A compositionally biased stretch (low complexity) spans 16-79 (LYNNTNTNSN…NSSNSLSSSF (64 aa)). 4 disordered regions span residues 16–96 (LYNN…SGYN), 111–181 (KRSN…TTPL), 221–335 (NNSN…NNNK), and 409–515 (RIFG…NKRK). Polar residues predominate over residues 116–129 (LDDNMSVPTLQNFT). Composition is skewed to low complexity over residues 130-180 (NNNN…PTTP) and 221-260 (NNSN…NNNN). A compositionally biased stretch (polar residues) spans 261–272 (QSIVPQSIHLQS). A compositionally biased stretch (low complexity) spans 273 to 334 (TTPQIQPLSL…NNSYNTNNNN (62 aa)). The segment covering 425–434 (RPRRFRKSKV) has biased composition (basic residues). The span at 442 to 511 (HNNNNNNINN…GNGNTNSTNN (70 aa)) shows a compositional bias: low complexity. The GATA-type zinc finger occupies 522–547 (CTSCGTTSSPEWRKGPAGNQSLCNAC). Residues 619–650 (QQQQQQQQQQQNHHHQQLQQQQQQQQQQQLHH) form a disordered region.

Functionally, transcription factor that regulates morphogenetic cell movement during development. The chain is GATA zinc finger domain-containing protein 11 (gtaK) from Dictyostelium discoideum (Social amoeba).